A 1241-amino-acid polypeptide reads, in one-letter code: ATP-dependent helicase/nuclease subunit A (1241 aa).

The UvrD-like helicase ATP-binding domain occupies 12-485 (SQWTDDQWKA…IDLAKNFRSR (474 aa)). 33–40 (AAAGSGKT) provides a ligand contact to ATP. The region spanning 505–805 (GEIDYDADAE…RIMTIHKSKG (301 aa)) is the UvrD-like helicase C-terminal domain.

This sequence belongs to the helicase family. AddA subfamily. In terms of assembly, heterodimer of AddA and AddB/RexB. Requires Mg(2+) as cofactor.

The enzyme catalyses Couples ATP hydrolysis with the unwinding of duplex DNA by translocating in the 3'-5' direction.. It carries out the reaction ATP + H2O = ADP + phosphate + H(+). Its function is as follows. The heterodimer acts as both an ATP-dependent DNA helicase and an ATP-dependent, dual-direction single-stranded exonuclease. Recognizes the chi site generating a DNA molecule suitable for the initiation of homologous recombination. The AddA nuclease domain is required for chi fragment generation; this subunit has the helicase and 3' -&gt; 5' nuclease activities. This Bacillus cereus (strain B4264) protein is ATP-dependent helicase/nuclease subunit A.